The sequence spans 154 residues: Putative pre-16S rRNA nuclease (154 aa).

Belongs to the YqgF nuclease family.

The protein resides in the cytoplasm. Functionally, could be a nuclease involved in processing of the 5'-end of pre-16S rRNA. This chain is Putative pre-16S rRNA nuclease, found in Rickettsia akari (strain Hartford).